Consider the following 144-residue polypeptide: Small ribosomal subunit protein eS12 (144 aa).

Belongs to the eukaryotic ribosomal protein eS12 family.

The chain is Small ribosomal subunit protein eS12 (RPS12) from Trypanosoma brucei brucei.